Here is a 147-residue protein sequence, read N- to C-terminus: Transthyretin (147 aa).

The N-terminal stretch at 1–20 (MASLRLFLLCLAGLIFASEA) is a signal peptide. The residue at position 30 (Cys30) is a Sulfocysteine. An L-thyroxine-binding site is contributed by Lys35. 4-carboxyglutamate is present on Glu62. Ser72 is modified (phosphoserine). Glu74 serves as a coordination point for L-thyroxine. N-linked (GlcNAc...) asparagine glycosylation is present at Asn118. Ser137 serves as a coordination point for L-thyroxine.

It belongs to the transthyretin family. Homotetramer. Dimer of dimers. In the homotetramer, subunits assemble around a central channel that can accommodate two ligand molecules. Interacts with RBP4. Sulfonation of the reactive cysteine Cys-30 enhances the stability of the native conformation of TTR, avoiding misassembly of the protein leading to amyloid formation. As to expression, detected in serum and cerebrospinal fluid (at protein level). Highly expressed in the choroid plexus. Detected at lower levels in the liver.

It is found in the secreted. Functionally, thyroid hormone-binding protein. Probably transports thyroxine from the bloodstream to the brain. The sequence is that of Transthyretin (Ttr) from Rattus norvegicus (Rat).